The following is a 570-amino-acid chain: Urease subunit alpha (570 aa).

Positions 131–570 (GGMDSHIHFI…LPMAQRYFLF (440 aa)) constitute a Urease domain. Residues H136, H138, and K219 each coordinate Ni(2+). At K219 the chain carries N6-carboxylysine. Residue H221 participates in substrate binding. Ni(2+) contacts are provided by H248 and H274. H322 (proton donor) is an active-site residue. Residue D362 coordinates Ni(2+).

It belongs to the metallo-dependent hydrolases superfamily. Urease alpha subunit family. As to quaternary structure, heterotrimer of UreA (gamma), UreB (beta) and UreC (alpha) subunits. Three heterotrimers associate to form the active enzyme. Ni cation is required as a cofactor. Carboxylation allows a single lysine to coordinate two nickel ions.

The protein localises to the cytoplasm. It catalyses the reaction urea + 2 H2O + H(+) = hydrogencarbonate + 2 NH4(+). Its pathway is nitrogen metabolism; urea degradation; CO(2) and NH(3) from urea (urease route): step 1/1. The sequence is that of Urease subunit alpha from Allorhizobium ampelinum (strain ATCC BAA-846 / DSM 112012 / S4) (Agrobacterium vitis (strain S4)).